We begin with the raw amino-acid sequence, 137 residues long: Cytochrome b5 (137 aa).

The Cytochrome b5 heme-binding domain maps to 6 to 82; that stretch reads KKVYTLEEVA…MDEYYVGDID (77 aa). His41 and His65 together coordinate heme. A helical transmembrane segment spans residues 108–128; sequence FIIKILQFLVPLAILGLAVAI.

This sequence belongs to the cytochrome b5 family.

The protein localises to the endoplasmic reticulum membrane. It localises to the microsome membrane. Its function is as follows. Membrane bound hemoprotein which function as an electron carrier for several membrane bound oxygenases. The polypeptide is Cytochrome b5 (Oryza sativa subsp. japonica (Rice)).